Reading from the N-terminus, the 444-residue chain is Ribosomal protein uS12 methylthiotransferase RimO (444 aa).

Residues 2-118 (LKIALESLGC…IDKILKELSE (117 aa)) enclose the MTTase N-terminal domain. [4Fe-4S] cluster-binding residues include C11, C47, C81, C155, C159, and C162. The Radical SAM core domain maps to 141–371 (STPSYMAYLK…MMIQQKISEE (231 aa)). The region spanning 374–441 (DKKIGKTYEV…EYDLMGDVLY (68 aa)) is the TRAM domain.

Belongs to the methylthiotransferase family. RimO subfamily. The cofactor is [4Fe-4S] cluster.

It is found in the cytoplasm. The enzyme catalyses L-aspartate(89)-[ribosomal protein uS12]-hydrogen + (sulfur carrier)-SH + AH2 + 2 S-adenosyl-L-methionine = 3-methylsulfanyl-L-aspartate(89)-[ribosomal protein uS12]-hydrogen + (sulfur carrier)-H + 5'-deoxyadenosine + L-methionine + A + S-adenosyl-L-homocysteine + 2 H(+). Functionally, catalyzes the methylthiolation of an aspartic acid residue of ribosomal protein uS12. The sequence is that of Ribosomal protein uS12 methylthiotransferase RimO from Clostridioides difficile (strain 630) (Peptoclostridium difficile).